The following is a 292-amino-acid chain: Tetratricopeptide repeat protein 1 (292 aa).

The interval 23–125 is disordered; it reads TQEAECAGPP…STRLKEEGNE (103 aa). Composition is skewed to basic and acidic residues over residues 45–55 and 75–85; these read LLRDDEAHLQE and GADKVENKSNE. A phosphoserine mark is found at serine 83 and serine 90. Residues 99–125 show a composition bias toward basic and acidic residues; sequence ELEKNMSDEEKQKRREESTRLKEEGNE. TPR repeat units lie at residues 116-149, 155-188, and 189-222; these read STRL…CPSC, SILF…NPSY, and IRAI…DPSI.

Interacts with the GAP domain of NF1. Interacts (via TPR repeats) with HSP90AA1 and HSPA8.

The polypeptide is Tetratricopeptide repeat protein 1 (TTC1) (Homo sapiens (Human)).